Reading from the N-terminus, the 270-residue chain is 4-hydroxy-tetrahydrodipicolinate reductase (270 aa).

An NAD(+)-binding site is contributed by 7 to 12 (GANGRM). Arginine 34 lines the NADP(+) pocket. Residues 97-99 (GTT) and 121-124 (SGNM) each bind NAD(+). Catalysis depends on histidine 155, which acts as the Proton donor/acceptor. Residue histidine 156 participates in (S)-2,3,4,5-tetrahydrodipicolinate binding. Lysine 159 acts as the Proton donor in catalysis. Residue 165–166 (GT) coordinates (S)-2,3,4,5-tetrahydrodipicolinate.

This sequence belongs to the DapB family.

The protein resides in the cytoplasm. It catalyses the reaction (S)-2,3,4,5-tetrahydrodipicolinate + NAD(+) + H2O = (2S,4S)-4-hydroxy-2,3,4,5-tetrahydrodipicolinate + NADH + H(+). The enzyme catalyses (S)-2,3,4,5-tetrahydrodipicolinate + NADP(+) + H2O = (2S,4S)-4-hydroxy-2,3,4,5-tetrahydrodipicolinate + NADPH + H(+). It participates in amino-acid biosynthesis; L-lysine biosynthesis via DAP pathway; (S)-tetrahydrodipicolinate from L-aspartate: step 4/4. In terms of biological role, catalyzes the conversion of 4-hydroxy-tetrahydrodipicolinate (HTPA) to tetrahydrodipicolinate. In Bartonella tribocorum (strain CIP 105476 / IBS 506), this protein is 4-hydroxy-tetrahydrodipicolinate reductase.